We begin with the raw amino-acid sequence, 393 residues long: Calreticulin (393 aa).

Residues 1-16 (MLSILLTLLLSKYALG) form the signal peptide. Asn27 carries N-linked (GlcNAc...) asparagine glycosylation. Cys103 and Cys135 are disulfide-bonded. Residues Tyr107, Lys109, Tyr126, and Asp133 each coordinate an alpha-D-glucoside. 7 consecutive repeat copies span residues 189–200 (VEEGSLEDDWDM), 208–219 (DPNDKKPDDWVD), 225–236 (DPDDKKPDNWDQ), 242–253 (DMDAKKPDDWDD), 257–267 (GEWERPQKDNP), 271–281 (GEWTPRRIDNP), and 285–295 (GEWKPVQIDNP). The tract at residues 189 to 253 (VEEGSLEDDW…DAKKPDDWDD (65 aa)) is 4 X 12 AA approximate repeats. The tract at residues 194–277 (LEDDWDMLPP…EYKGEWTPRR (84 aa)) is disordered. The span at 202–216 (PPKKIDDPNDKKPDD) shows a compositional bias: basic and acidic residues. Acidic residues predominate over residues 217–226 (WVDEQFIDDP). 2 stretches are compositionally biased toward basic and acidic residues: residues 227-249 (DDKK…KKPD) and 258-277 (EWER…TPRR). A 3 X 11 AA approximate repeats region spans residues 257–295 (GEWERPQKDNPEYKGEWTPRRIDNPKYKGEWKPVQIDNP). Position 315 (Asp315) interacts with an alpha-D-glucoside. A disordered region spans residues 351–393 (AEVAKEQSSAKDDKEEAEETKERKELPYDAKASDEPSGDHDEL). The Prevents secretion from ER signature appears at 390 to 393 (HDEL).

The protein belongs to the calreticulin family.

It localises to the endoplasmic reticulum lumen. Molecular calcium-binding chaperone promoting folding, oligomeric assembly and quality control in the ER via the calreticulin/calnexin cycle. This lectin may interact transiently with almost all of the monoglucosylated glycoproteins that are synthesized in the ER. The chain is Calreticulin from Schistosoma mansoni (Blood fluke).